Reading from the N-terminus, the 487-residue chain is Argininosuccinate lyase (487 aa).

This sequence belongs to the lyase 1 family. Argininosuccinate lyase subfamily.

It is found in the cytoplasm. It catalyses the reaction 2-(N(omega)-L-arginino)succinate = fumarate + L-arginine. It functions in the pathway amino-acid biosynthesis; L-arginine biosynthesis; L-arginine from L-ornithine and carbamoyl phosphate: step 3/3. In Natranaerobius thermophilus (strain ATCC BAA-1301 / DSM 18059 / JW/NM-WN-LF), this protein is Argininosuccinate lyase.